The following is a 556-amino-acid chain: Formate--tetrahydrofolate ligase (556 aa).

65–72 contributes to the ATP binding site; the sequence is TPAGEGKS.

Belongs to the formate--tetrahydrofolate ligase family.

It catalyses the reaction (6S)-5,6,7,8-tetrahydrofolate + formate + ATP = (6R)-10-formyltetrahydrofolate + ADP + phosphate. The protein operates within one-carbon metabolism; tetrahydrofolate interconversion. This chain is Formate--tetrahydrofolate ligase, found in Streptococcus thermophilus (strain ATCC BAA-491 / LMD-9).